The primary structure comprises 280 residues: Phosphatidylserine decarboxylase proenzyme (280 aa).

Residues Asp-90, His-146, and Ser-247 each act as charge relay system; for autoendoproteolytic cleavage activity in the active site. Ser-247 acts as the Schiff-base intermediate with substrate; via pyruvic acid; for decarboxylase activity in catalysis. Ser-247 bears the Pyruvic acid (Ser); by autocatalysis mark.

It belongs to the phosphatidylserine decarboxylase family. PSD-B subfamily. Prokaryotic type I sub-subfamily. In terms of assembly, heterodimer of a large membrane-associated beta subunit and a small pyruvoyl-containing alpha subunit. It depends on pyruvate as a cofactor. Post-translationally, is synthesized initially as an inactive proenzyme. Formation of the active enzyme involves a self-maturation process in which the active site pyruvoyl group is generated from an internal serine residue via an autocatalytic post-translational modification. Two non-identical subunits are generated from the proenzyme in this reaction, and the pyruvate is formed at the N-terminus of the alpha chain, which is derived from the carboxyl end of the proenzyme. The autoendoproteolytic cleavage occurs by a canonical serine protease mechanism, in which the side chain hydroxyl group of the serine supplies its oxygen atom to form the C-terminus of the beta chain, while the remainder of the serine residue undergoes an oxidative deamination to produce ammonia and the pyruvoyl prosthetic group on the alpha chain. During this reaction, the Ser that is part of the protease active site of the proenzyme becomes the pyruvoyl prosthetic group, which constitutes an essential element of the active site of the mature decarboxylase.

The protein resides in the cell membrane. The catalysed reaction is a 1,2-diacyl-sn-glycero-3-phospho-L-serine + H(+) = a 1,2-diacyl-sn-glycero-3-phosphoethanolamine + CO2. The protein operates within phospholipid metabolism; phosphatidylethanolamine biosynthesis; phosphatidylethanolamine from CDP-diacylglycerol: step 2/2. In terms of biological role, catalyzes the formation of phosphatidylethanolamine (PtdEtn) from phosphatidylserine (PtdSer). In Myxococcus xanthus (strain DK1622), this protein is Phosphatidylserine decarboxylase proenzyme.